Consider the following 338-residue polypeptide: Fructose-1,6-bisphosphatase 1 (338 aa).

The residue at position 2 (Ala2) is an N-acetylalanine. Residues 18–22 and 28–32 contribute to the AMP site; these read VMEEG and TGELT. Mg(2+) contacts are provided by Asp69 and Glu98. 113-114 contributes to the AMP binding site; that stretch reads KY. 3 residues coordinate Mg(2+): Asp119, Leu121, and Asp122. 122–125 is a substrate binding site; it reads DGSS. Residue Arg141 coordinates AMP. Lys151 carries the post-translational modification N6-succinyllysine. Substrate-binding positions include 213–216, 244–249, Tyr265, and 275–277; these read NEGY, RYVGSM, and KLR. A phosphotyrosine mark is found at Tyr216, Tyr245, and Tyr265. Glu281 is a Mg(2+) binding site.

This sequence belongs to the FBPase class 1 family. In terms of assembly, homotetramer. Mg(2+) is required as a cofactor. As to expression, expressed in pancreatic islets.

The catalysed reaction is beta-D-fructose 1,6-bisphosphate + H2O = beta-D-fructose 6-phosphate + phosphate. Its pathway is carbohydrate biosynthesis; gluconeogenesis. Subject to complex allosteric regulation. The enzyme can assume an active R-state, or an inactive T-state. Intermediate conformations may exist. AMP acts as an allosteric inhibitor. AMP binding affects the turnover of bound substrate and not the affinity for substrate. Fructose 2,6-bisphosphate acts as a competitive inhibitor. Fructose 2,6-bisphosphate and AMP have synergistic effects. Functionally, catalyzes the hydrolysis of fructose 1,6-bisphosphate to fructose 6-phosphate in the presence of divalent cations, acting as a rate-limiting enzyme in gluconeogenesis. Plays a role in regulating glucose sensing and insulin secretion of pancreatic beta-cells. Appears to modulate glycerol gluconeogenesis in liver. Important regulator of appetite and adiposity; increased expression of the protein in liver after nutrient excess increases circulating satiety hormones and reduces appetite-stimulating neuropeptides and thus seems to provide a feedback mechanism to limit weight gain. The sequence is that of Fructose-1,6-bisphosphatase 1 (FBP1) from Homo sapiens (Human).